The following is a 113-amino-acid chain: Protein FMC1 homolog (113 aa).

The disordered stretch occupies residues 94–113; it reads SAGLVGLQLPHQPGGKGWEP.

This sequence belongs to the FMC1 family. As to quaternary structure, interacts with ATPAF2.

It localises to the mitochondrion. In terms of biological role, plays a role in the assembly/stability of the mitochondrial membrane ATP synthase (F(1)F(0) ATP synthase or Complex V). The protein is Protein FMC1 homolog of Rattus norvegicus (Rat).